Here is a 542-residue protein sequence, read N- to C-terminus: Protein OS-9 homolog (542 aa).

Residues 1 to 21 form the signal peptide; that stretch reads MQAKIIYALSAISALIPLGSS. Residues asparagine 52 and asparagine 74 are each glycosylated (N-linked (GlcNAc...) asparagine). Cystine bridges form between cysteine 70–cysteine 258, cysteine 117–cysteine 130, cysteine 193–cysteine 227, and cysteine 208–cysteine 239. An MRH domain is found at 115 to 241; the sequence is ERCIFYQAGF…QVTIPELCNL (127 aa). A mannooligosaccharide derivative-binding residues include tryptophan 125, glutamine 137, aspartate 194, arginine 200, glutamate 223, and tyrosine 229. A glycan (N-linked (GlcNAc...) asparagine) is linked at asparagine 380. Residues 497 to 528 are disordered; sequence NARMDDDESTSHTTRDIGEAGSQTTGNTESEV. Over residues 505-514 the composition is skewed to basic and acidic residues; sequence STSHTTRDIG. Positions 517 to 528 are enriched in polar residues; sequence GSQTTGNTESEV. Residues 539–542 carry the Prevents secretion from ER motif; that stretch reads HDEL.

Belongs to the OS-9 family. Homodimer. Component of the HRD1 ubiquitin ligase complex which contains the E3 ligase HRD1, its cofactors HRD3, USA1 and DER1, substrate recruiting factor YOS9 and CDC48-binding protein UBX2. Within the complex, interacts (via N-terminus) with HRD3. In ERAD-L, HRD3 and YOS9 jointly bind misfolded glycoproteins in the endoplasmic reticulum (ER) lumen. Movement of ERAD-L substrates through the ER membrane is facilitated by HRD1 and DER1 which have lateral gates facing each other and which distort the membrane region between the lateral gates, making it much thinner than a normal phospholipid bilayer. Substrates insert into the membrane as a hairpin loop with one strand interacting with DER1 and the other with HRD1. The HRD1 complex interacts with the heterotrimeric CDC48-NPL4-UFD1 ATPase complex which is recruited by UBX2 via its interaction with CDC48 and which moves ubiquitinated substrates to the cytosol for targeting to the proteasome. Interacts with KAR2 and EMP47. Interacts with misfolded ER lumenal proteins like PCR1. Interacts with the GPI-anchored proteins GAS1 and MKC7.

The protein resides in the endoplasmic reticulum membrane. Lectin involved in the quality control of the secretory pathway. As a member of the endoplasmic reticulum-associated degradation lumenal (ERAD-L) surveillance system, targets misfolded endoplasmic reticulum lumenal glycoproteins for degradation. The recognition of targets is N-glycan specific. Functions in recruiting misfolded protein substrates in conjunction with HRD3. The chain is Protein OS-9 homolog (YOS9) from Saccharomyces cerevisiae (strain ATCC 204508 / S288c) (Baker's yeast).